The chain runs to 315 residues: tRNA-cytidine(32) 2-sulfurtransferase (315 aa).

The short motif at 39–44 is the PP-loop motif element; that stretch reads SGGKDS. Residues C114, C117, and C205 each contribute to the [4Fe-4S] cluster site.

It belongs to the TtcA family. Homodimer. It depends on Mg(2+) as a cofactor. [4Fe-4S] cluster serves as cofactor.

It localises to the cytoplasm. It carries out the reaction cytidine(32) in tRNA + S-sulfanyl-L-cysteinyl-[cysteine desulfurase] + AH2 + ATP = 2-thiocytidine(32) in tRNA + L-cysteinyl-[cysteine desulfurase] + A + AMP + diphosphate + H(+). It functions in the pathway tRNA modification. In terms of biological role, catalyzes the ATP-dependent 2-thiolation of cytidine in position 32 of tRNA, to form 2-thiocytidine (s(2)C32). The sulfur atoms are provided by the cysteine/cysteine desulfurase (IscS) system. This Ralstonia pickettii (strain 12J) protein is tRNA-cytidine(32) 2-sulfurtransferase.